Consider the following 511-residue polypeptide: Trigger factor (511 aa).

In terms of domain architecture, PPIase FKBP-type spans 168-253 (GDLLTIDFVG…VKEVKAPAEV (86 aa)). Residues 446 to 511 (DEHEHHHHDH…KAPAKKKKED (66 aa)) are disordered. The segment covering 455–478 (HDHDHDHDHDHDHGHDHDHGDEKP) has biased composition (basic and acidic residues). Residues 479–488 (KKKPAAKKAA) are compositionally biased toward basic residues. A compositionally biased stretch (basic and acidic residues) spans 489-498 (AKSDDGEAKP). The span at 499 to 511 (AAKKAPAKKKKED) shows a compositional bias: basic residues.

Belongs to the FKBP-type PPIase family. Tig subfamily.

It localises to the cytoplasm. It catalyses the reaction [protein]-peptidylproline (omega=180) = [protein]-peptidylproline (omega=0). Its function is as follows. Involved in protein export. Acts as a chaperone by maintaining the newly synthesized protein in an open conformation. Functions as a peptidyl-prolyl cis-trans isomerase. This is Trigger factor from Parvibaculum lavamentivorans (strain DS-1 / DSM 13023 / NCIMB 13966).